The following is a 382-amino-acid chain: Lipid-A-disaccharide synthase (382 aa).

This sequence belongs to the LpxB family.

It catalyses the reaction 2-N,3-O-bis[(3R)-3-hydroxytetradecanoyl]-alpha-D-glucosaminyl 1-phosphate + UDP-2-N,3-O-bis[(3R)-3-hydroxytetradecanoyl]-alpha-D-glucosamine = lipid A disaccharide (E. coli) + UDP + H(+). The catalysed reaction is a lipid X + a UDP-2-N,3-O-bis[(3R)-3-hydroxyacyl]-alpha-D-glucosamine = a lipid A disaccharide + UDP + H(+). The protein operates within glycolipid biosynthesis; lipid IV(A) biosynthesis; lipid IV(A) from (3R)-3-hydroxytetradecanoyl-[acyl-carrier-protein] and UDP-N-acetyl-alpha-D-glucosamine: step 5/6. Its function is as follows. Condensation of UDP-2,3-diacylglucosamine and 2,3-diacylglucosamine-1-phosphate to form lipid A disaccharide, a precursor of lipid A, a phosphorylated glycolipid that anchors the lipopolysaccharide to the outer membrane of the cell. This Escherichia coli O45:K1 (strain S88 / ExPEC) protein is Lipid-A-disaccharide synthase.